A 308-amino-acid chain; its full sequence is Mitochondrial import receptor subunit TOM40B (308 aa).

A disordered region spans residues 1–29 (MGNTLGLAPMGTLPRRSPRREEPLPNPGS). Residues 281–308 (PLPVTLALGAFLNHWRNRFHCGFSITVG) are required for mitochondrial targeting.

This sequence belongs to the Tom40 family. As to quaternary structure, forms part of the preprotein translocase of the outer mitochondrial membrane (TOM complex) containing TOMM22, TOMM40, TOMM40L and TOMM70. Interacts with mitochondrial targeting sequences.

It is found in the mitochondrion outer membrane. Potential channel-forming protein implicated in import of protein precursors into mitochondria. The protein is Mitochondrial import receptor subunit TOM40B (TOMM40L) of Homo sapiens (Human).